We begin with the raw amino-acid sequence, 195 residues long: Cytochrome b-245 light chain (195 aa).

Over 2–7 the chain is Cytoplasmic; the sequence is GQIEWA. Residues 8–30 form a helical membrane-spanning segment; sequence MWANEQALASGLILITGGIVATA. The Extracellular segment spans residues 31 to 35; it reads GRFTQ. Residues 36–53 traverse the membrane as a helical segment; that stretch reads WYFGAYSIVAGVFVCLLE. Residues 54–69 are Cytoplasmic-facing; it reads YPRGKRKKGSTMERWG. An intramembrane segment occupies 70 to 80; that stretch reads QKYMTAVVKLF. At 81–86 the chain is on the cytoplasmic side; the sequence is GPFTRN. The chain crosses the membrane as a helical span at residues 87–104; sequence YYVRAVLHLLLSVPAGFL. A topological domain (extracellular) is located at residue Leu-105. Residues 106-126 form a helical membrane-spanning segment; sequence ATILGTACLAIASGIYLLAAV. The Cytoplasmic portion of the chain corresponds to 127-195; the sequence is RGEQWTPIEP…NPIPVTDEVV (69 aa). The interval 134-195 is disordered; sequence IEPKPRERPQ…NPIPVTDEVV (62 aa). Thr-147 is modified (phosphothreonine). A Glycyl lysine isopeptide (Lys-Gly) (interchain with G-Cter in ubiquitin) cross-link involves residue Lys-149. Position 168 is a phosphoserine (Ser-168).

It belongs to the p22phox family. Component of the phagocyte NADPH oxidase core complex/cytochrome b558 complex, composed of CYBB (heavy chain (beta)) and CYBA (light chain (alpha)). Component of the phagocyte NADPH oxidase complex composed of an obligatory core heterodimer formed by the membrane proteins CYBA and CYBB and the cytosolic regulatory subunits NCF1/p47-phox, NCF2/p67-phox, NCF4/p40-phox and the small GTPase RAC1 or RAC2. Interacts with NCF1 (via SH3 domain). Interacts with SH3PXD2A. Interacts with DUOX1, DUOX2 and TPO. Interacts with NOX4; this interaction mediates superoxide generation. Interacts with calprotectin (S100A8/9). Interacts with GBP7. Interacts with NOXO1. Forms a heterodimer with NOX3 and is essential for activity and cell membrane localization of NOX3. Interacts with NOX1. Phosphorylation at Thr-147 enhances NADPH oxidase activity by promoting NCF1/p47-phox binding. Post-translationally, ubiquitinated at Lys-149 likely by RNF145.

Its subcellular location is the cell membrane. Its function is as follows. Subunit of NADPH oxidase complexes that is required for the NADPH oxidase activity that generates, in various cell types, superoxide from molecular oxygen utilizing NADPH as an electron donor. Subunit of the phagocyte NADPH oxidase complex that mediates the transfer of electrons from cytosolic NADPH to O2 to produce the superoxide anion (O2(-)). In the activated complex, electrons are first transferred from NADPH to flavin adenine dinucleotide (FAD) and subsequently transferred via two heme molecules to molecular oxygen, producing superoxide through an outer-sphere reaction. Activation of the NADPH oxidase complex is initiated by the assembly of cytosolic subunits of the NADPH oxidase complex with the core NADPH oxidase complex to form a complex at the plasma membrane or phagosomal membrane. This activation process is initiated by phosphorylation dependent binding of the cytosolic NCF1/p47-phox subunit to the C-terminus of CYBA/p22-phox. Aassociates with NOX3 to form a functional NADPH oxidase constitutively generating superoxide. In Homo sapiens (Human), this protein is Cytochrome b-245 light chain.